Reading from the N-terminus, the 223-residue chain is UPF0441 protein YgiB (223 aa).

The segment covering 178-195 has biased composition (low complexity); that stretch reads TVPKTAMAPKPATTTTVT. The interval 178–223 is disordered; the sequence is TVPKTAMAPKPATTTTVTRGGFGESVAKQSTMQRSATGTSSRSMGG. Over residues 204–223 the composition is skewed to polar residues; it reads AKQSTMQRSATGTSSRSMGG.

This sequence belongs to the UPF0441 family.

This is UPF0441 protein YgiB from Shigella flexneri serotype 5b (strain 8401).